The following is a 357-amino-acid chain: IGF-like family receptor 1 (357 aa).

A signal peptide spans 1-22; the sequence is MGPLRLLPTAVLLLAQAAPWEA. Residues 23-160 lie on the Extracellular side of the membrane; it reads SQHCGRLEYW…HKAPQQAWPS (138 aa). Positions 100–147 are disordered; the sequence is IPSGSRGGTGRPCREPVPNKEPCPLTPGKSSILSSQEPSSPGIPSVSW. The segment covering 129 to 139 has biased composition (low complexity); the sequence is SSILSSQEPSS. Residues 161–181 traverse the membrane as a helical segment; sequence LSFALFLVLVLLVTSAIILLA. At 182-357 the chain is on the cytoplasmic side; it reads LQRHHRRLDQ…KLGSSGACLA (176 aa).

It is found in the cell membrane. Functionally, probable cell membrane receptor for the IGF-like family protein IGFL. The protein is IGF-like family receptor 1 (IGFLR1) of Bos taurus (Bovine).